Reading from the N-terminus, the 257-residue chain is Deoxyribose-phosphate aldolase (257 aa).

Catalysis depends on D102, which acts as the Proton donor/acceptor. Catalysis depends on K166, which acts as the Schiff-base intermediate with acetaldehyde. K198 (proton donor/acceptor) is an active-site residue.

It belongs to the DeoC/FbaB aldolase family. DeoC type 2 subfamily.

It localises to the cytoplasm. It carries out the reaction 2-deoxy-D-ribose 5-phosphate = D-glyceraldehyde 3-phosphate + acetaldehyde. Its pathway is carbohydrate degradation; 2-deoxy-D-ribose 1-phosphate degradation; D-glyceraldehyde 3-phosphate and acetaldehyde from 2-deoxy-alpha-D-ribose 1-phosphate: step 2/2. Functionally, catalyzes a reversible aldol reaction between acetaldehyde and D-glyceraldehyde 3-phosphate to generate 2-deoxy-D-ribose 5-phosphate. This is Deoxyribose-phosphate aldolase from Shewanella frigidimarina (strain NCIMB 400).